The chain runs to 562 residues: Protein wntless (562 aa).

The Cytoplasmic segment spans residues 1–13 (MSGTILENLSGRK). A helical transmembrane segment spans residues 14-34 (LSILVGSLLLCQVLCFLLGGL). Topologically, residues 35–239 (YAPVPAGHTN…AIHQNGGFTH (205 aa)) are lumenal. Asparagine 58 carries N-linked (GlcNAc...) asparagine glycosylation. Residues 240–260 (VWLMLKTLLFPFVVGIMVWFW) traverse the membrane as a helical segment. The Cytoplasmic segment spans residues 261-270 (RRVHLLQRSP). A helical transmembrane segment spans residues 271 to 291 (ALLEYMLLYLGGALTFLNLPL). Residues 292 to 311 (EYLSLTIEMPYMLLLSDIRQ) lie on the Lumenal side of the membrane. A helical membrane pass occupies residues 312–332 (GIFYAMLLSFWLVFAGEHMLI). Residues 333-344 (QDSSNKSTIRSR) lie on the Cytoplasmic side of the membrane. The chain crosses the membrane as a helical span at residues 345–365 (YWKHLSAVVVGCISLFVFDIS). Topologically, residues 366–386 (ERGVQLRNPFYSIWTTPLGAK) are lumenal. The chain crosses the membrane as a helical span at residues 387-407 (VAMSFILLAGVSAAVYFLFLC). Topologically, residues 408–441 (YMISKVFKNIGDKRTSLPSMSQARRLHYEGLIYR) are cytoplasmic. A helical transmembrane segment spans residues 442–462 (FKFLMLATLLCAALTVTGFIM). Residues 463–482 (GQMAEGQWKWNDDVEIQLTS) lie on the Lumenal side of the membrane. A helical transmembrane segment spans residues 483-503 (AFLTGVYGMWNIYIFALLILY). Residues 504 to 562 (APSHKQWPTMHHSDETTQSNENIVASAASEEIEFSNLPSDSNPSEISSLTSFTRKVAFE) lie on the Cytoplasmic side of the membrane. The segment at 538-562 (SNLPSDSNPSEISSLTSFTRKVAFE) is disordered. Polar residues predominate over residues 539 to 556 (NLPSDSNPSEISSLTSFT).

Belongs to the wntless family. Interacts with wg; in the Golgi. Interacts with Vps35, a component of the retromer complex; wls stability is regulated by Vps35.

Its subcellular location is the presynaptic cell membrane. The protein resides in the postsynaptic cell membrane. It is found in the cell membrane. It localises to the endoplasmic reticulum membrane. The protein localises to the endosome membrane. Its subcellular location is the golgi apparatus membrane. A segment polarity gene required for wingless (wg)-dependent patterning processes, acting in both wg-sending cells and wg-target cells. In non-neuronal cells wls directs wg secretion. The wls traffic loop encompasses the Golgi, the cell surface, an endocytic compartment and a retrograde route leading back to the Golgi, and involves clathrin-mediated endocytosis and the retromer complex (a conserved protein complex consisting of Vps35 and Vps26). In neuronal cells (the larval motorneuron NMJ), the wg signal moves across the synapse via the release of wls-containing exosome-like vesicles. Postsynaptic wls is required for the trafficking of fz2 through the fz2-interacting protein Grip. The sequence is that of Protein wntless from Drosophila pseudoobscura pseudoobscura (Fruit fly).